The sequence spans 406 residues: MNETPKPNSFRSGPDEDGRFGIYGGRFVAETLMPLILDLQDEWNKAKSDPAFQAELKHLGAHYIGRPSPLYFAERLTAELGGAKIYFKREELNHTGSHKINNCIGQILLAKRMGKTRIIAETGAGQHGVASATVAARFGLPCVVYMGATDVERQAPNVFRMKLLGAEVKPVTAGSGTLKDAMNEALRDWVTNVEDTYYLIGTAAGPHPYPEMVRDFQSVIGAEAKEQMLAAEGRLPDLVVAAVGGGSNAIGIFHPFLDDSSVKIVGVEAGGKGLQGDEHCASITAGSPGVLHGNRTYLLQDGDGQIKEGHSISAGLDYPGIGPEHSWLSDIGRVDYVPIMDHEALEAFQTLTRLEGIIPALEAAHAIAEVIKRAPKMGKDEIILMNLSGRGDKDIFTVGKILGMGL.

Lys99 carries the post-translational modification N6-(pyridoxal phosphate)lysine.

This sequence belongs to the TrpB family. As to quaternary structure, tetramer of two alpha and two beta chains. The cofactor is pyridoxal 5'-phosphate.

It carries out the reaction (1S,2R)-1-C-(indol-3-yl)glycerol 3-phosphate + L-serine = D-glyceraldehyde 3-phosphate + L-tryptophan + H2O. The protein operates within amino-acid biosynthesis; L-tryptophan biosynthesis; L-tryptophan from chorismate: step 5/5. Its function is as follows. The beta subunit is responsible for the synthesis of L-tryptophan from indole and L-serine. Essential for production of nod factors and establishment of symbiosis. The protein is Tryptophan synthase beta chain of Rhizobium etli (strain ATCC 51251 / DSM 11541 / JCM 21823 / NBRC 15573 / CFN 42).